The sequence spans 166 residues: Endoribonuclease YbeY (166 aa).

Zn(2+)-binding residues include H132, H136, and H142.

Belongs to the endoribonuclease YbeY family. The cofactor is Zn(2+).

It is found in the cytoplasm. Single strand-specific metallo-endoribonuclease involved in late-stage 70S ribosome quality control and in maturation of the 3' terminus of the 16S rRNA. In Clostridium botulinum (strain Loch Maree / Type A3), this protein is Endoribonuclease YbeY.